We begin with the raw amino-acid sequence, 244 residues long: UPF0280 protein Mhun_0136 (244 aa).

This sequence belongs to the UPF0280 family.

This is UPF0280 protein Mhun_0136 from Methanospirillum hungatei JF-1 (strain ATCC 27890 / DSM 864 / NBRC 100397 / JF-1).